We begin with the raw amino-acid sequence, 22 residues long: Unknown protein 20 from 2D-PAGE (22 aa).

The sequence is that of Unknown protein 20 from 2D-PAGE from Bombyx mori (Silk moth).